The primary structure comprises 340 residues: GATA transcription factor 20 (340 aa).

Residues Met1–His88 are disordered. Residues Ala25–Glu47 show a composition bias toward low complexity. The span at Ala48–Gly60 shows a compositional bias: basic and acidic residues. Residues Ala61 to Asp84 show a composition bias toward acidic residues. The Tify domain maps to Gln121–Gly156. Positions Arg182–Ser224 constitute a CCT domain. The disordered stretch occupies residues Gln215 to Ser253. Polar residues predominate over residues Ser233–Trp244. The GATA-type zinc-finger motif lies at Cys257–Cys284. Positions Asp313 to Gln325 are enriched in polar residues. The interval Asp313–Thr340 is disordered.

It belongs to the type IV zinc-finger family. Class C subfamily.

The protein localises to the nucleus. Its function is as follows. Transcriptional activator that specifically binds 5'-GATA-3' or 5'-GAT-3' motifs within gene promoters. This chain is GATA transcription factor 20, found in Oryza sativa subsp. japonica (Rice).